The primary structure comprises 572 residues: MDYPSFHEDPTKDESTVAEQRKGQSNEEKPLIDLNDSLDEQRNAYNEHCKNHDQQPSQQVRNMEDEANQYEQTDSSSDQEVMNEKQSLDKENRNDNIPHENNPGQQEINEPIFDFHMFLEQLRSSSAEPVAKYLKSFLSEFTKRRWTVNYQVKLIRDFLKFINEKIEQYEPWASGSQAEIDNAKEGMEKLVLNRLYTSLFSPEIAKSGIPLSSEHSDDVEEDRVLSEKMELFQWITEENLDIKKQKSSSKFFKLAADELRRINDYHAPRDKIICLLNCCKVIFSYLRNVVKEESADMFVPILIFVVLQARPAHLVSNIQYIQRFRSPEKLTGEVMYYLSTLMGAMSFIETLDCSSLTITEEEFNAQIEKSIKKMEERKLSEKSESKTAVNENATYKDPVLSRGLSSSIDVSTGVALVNLPEELENMKYLQIDTPESKEYPRSTRPRGSSHSGSFTTDSGKRSRRNSNKYVGSSDRPPYRVSRAYSSSATHSPIVHEEQPVDDGLQQNDDLREATTASLETAEAERLQAREKAEAITALRAMFPAFDSEVIEVVLNAQQGRLSSSIDSLLEMS.

2 stretches are compositionally biased toward basic and acidic residues: residues Met-1–Leu-31 and Asp-39–Asp-53. Residues Met-1–Ile-108 form a disordered region. A compositionally biased stretch (polar residues) spans Gln-69 to Glu-80. Over residues Met-82–Pro-98 the composition is skewed to basic and acidic residues. The VPS9 domain maps to Val-219–Thr-357. The disordered stretch occupies residues Gln-430 to Asp-502. Over residues Pro-445–Asp-457 the composition is skewed to polar residues. Positions Arg-529–Met-571 constitute a CUE domain.

Required for vacuolar protein sorting; may be required for the consumption of transport vesicles containing vacuolar protein precursors. Required for vacuolar fusion. The protein is Vacuolar protein sorting-associated protein vps901 (vps901) of Schizosaccharomyces pombe (strain 972 / ATCC 24843) (Fission yeast).